We begin with the raw amino-acid sequence, 473 residues long: Photosystem II CP43 reaction center protein (473 aa).

A propeptide spanning residues 1–14 (MKTLYSLRRFYPVE) is cleaved from the precursor. Thr15 bears the N-acetylthreonine mark. Thr15 bears the Phosphothreonine mark. Transmembrane regions (helical) follow at residues 69 to 93 (LFEV…PHLA), 134 to 155 (LLGP…KDRN), 178 to 200 (KALY…RKIT), 255 to 275 (KPFA…LSYS), and 291 to 312 (WFNN…ASQA). Glu367 provides a ligand contact to [CaMn4O5] cluster. A helical transmembrane segment spans residues 447-471 (RARAAAAGFEKGIDRDFEPVLSMTP).

The protein belongs to the PsbB/PsbC family. PsbC subfamily. In terms of assembly, PSII is composed of 1 copy each of membrane proteins PsbA, PsbB, PsbC, PsbD, PsbE, PsbF, PsbH, PsbI, PsbJ, PsbK, PsbL, PsbM, PsbT, PsbX, PsbY, PsbZ, Psb30/Ycf12, at least 3 peripheral proteins of the oxygen-evolving complex and a large number of cofactors. It forms dimeric complexes. It depends on Binds multiple chlorophylls and provides some of the ligands for the Ca-4Mn-5O cluster of the oxygen-evolving complex. It may also provide a ligand for a Cl- that is required for oxygen evolution. PSII binds additional chlorophylls, carotenoids and specific lipids. as a cofactor.

It localises to the plastid. Its subcellular location is the chloroplast thylakoid membrane. In terms of biological role, one of the components of the core complex of photosystem II (PSII). It binds chlorophyll and helps catalyze the primary light-induced photochemical processes of PSII. PSII is a light-driven water:plastoquinone oxidoreductase, using light energy to abstract electrons from H(2)O, generating O(2) and a proton gradient subsequently used for ATP formation. The chain is Photosystem II CP43 reaction center protein from Gossypium hirsutum (Upland cotton).